The primary structure comprises 444 residues: Maintenance of mitochondrial morphology protein 1 (444 aa).

The segment covering 1-16 has biased composition (polar residues); the sequence is MKGVENTLSQSESVNR. The segment at 1–20 is disordered; it reads MKGVENTLSQSESVNRGYNG. Topologically, residues 1 to 107 are lumenal; sequence MKGVENTLSQ…TFSSRSFAEG (107 aa). A helical membrane pass occupies residues 108–128; it reads LVVGQLSVIVVLIFFIKFFIF. Over 129 to 444 the chain is Cytoplasmic; that stretch reads SDGPAKTGGG…QEEDPSRAPE (316 aa). Positions 136 to 157 are disordered; the sequence is GGGGGSSAESRSSGFTGSPLTS. Residues 142-157 are compositionally biased toward low complexity; sequence SAESRSSGFTGSPLTS. Residues 204 to 418 enclose the SMP-LTD domain; that stretch reads SPESLDWFNV…EPRFQFVKLP (215 aa). The segment at 425–444 is disordered; sequence KNTREEKSDMQEEDPSRAPE. Basic and acidic residues predominate over residues 426–444; that stretch reads NTREEKSDMQEEDPSRAPE.

This sequence belongs to the MMM1 family. Homodimer. Component of the ER-mitochondria encounter structure (ERMES) or MDM complex, composed of MMM1, MDM10, MDM12 and MDM34. An MMM1 homodimer associates with one molecule of MDM12 on each side in a pairwise head-to-tail manner, and the SMP-LTD domains of MMM1 and MDM12 generate a continuous hydrophobic tunnel for phospholipid trafficking.

The protein resides in the endoplasmic reticulum membrane. In terms of biological role, component of the ERMES/MDM complex, which serves as a molecular tether to connect the endoplasmic reticulum (ER) and mitochondria. Components of this complex are involved in the control of mitochondrial shape and protein biogenesis, and function in nonvesicular lipid trafficking between the ER and mitochondria. The MDM12-MMM1 subcomplex functions in the major beta-barrel assembly pathway that is responsible for biogenesis of all outer membrane beta-barrel proteins, and acts in a late step after the SAM complex. The MDM10-MDM12-MMM1 subcomplex further acts in the TOM40-specific pathway after the action of the MDM12-MMM1 complex. Essential for establishing and maintaining the structure of mitochondria and maintenance of mtDNA nucleoids. The polypeptide is Maintenance of mitochondrial morphology protein 1 (Eremothecium gossypii (strain ATCC 10895 / CBS 109.51 / FGSC 9923 / NRRL Y-1056) (Yeast)).